A 925-amino-acid polypeptide reads, in one-letter code: MNRFRVSKFRHTEARPPRREAWLSDIRAGTAPSCRNHIKSSCSLITFNSDRPGVLGIVPLQGQGEDKRRVAHLGCHSDLVTDLDFSPFDDFLLATGSADRTVKLWRLPGPGQALPSAPGVVLGPEDLPVEVLQFHPTSDGILVSAAGTTVKVWDAAKQQPLTELEAHGDLVQSAVWSRDGALVGTACKDKQLRIFDPRTKPQASQSTQAHENSRDSRLAWTGTWEHFVSTGFNQMREHEVKLWDTRFFSSALASLTLDTSLGCLMPLLDPDSGLLVLAGKGKRQLYCYEVVPQQPALSPVTQCVLESVLRGAALVPRQALAVMSCEVLRVLQLSDTAIVPIGYHVPRKAVEFHEDLFPDTAGCVPATDPHSWWAGDNQQAQKVSLNPACRPHPSFTSCLVPPTEPLPDTAQPAVTETPVGDADASEGFSSPPSSLTSPSTPSSLGPTLSSTSGIGTGPSLRSLQSLLGPSSKFRHAQGTVLHRDSHITNLKGLNLTTPGESDGFCANKLRVAVPLLSSGGQVAVLELRKPGRLPDTALPTLQNGAAVTDLAWDPFDPHRLAVAGEDARIRLWRVPAEGLEEVLTVPETVLTGHMEKICSLRFHPLAADVLASSSYDLTVRIWDLQAGVDRLKLQGHQDQIFSLAWSPDGQQLATVCKDGRVRVYRPRSGPEPLQEGPGPKGGRGARIVWVCDGRCLLVSGFDSQSERQLLLYEAEALAGGPLAVLGLDVAPSTLVPSYEPRHWPGAPDWQGDARVFLYELLPESPFFMECNSFTSPDPHKGFVLLPKTECDVREVELMRCLRCASPPWSLWPSGCPESGKSSFQDDVFPDTAVSWEPVLSAEAWLQGANGQPWLLSLQPPDMSPVSQAPREAPARRAPSSAQYLEEKSDQQKKEELLNAMVAKLGNREDPLPQDSFEGVDEDEWD.

WD repeat units follow at residues 75 to 115 (CHSD…QALP), 124 to 163 (PEDL…PLTE), 166 to 205 (AHGD…QASQ), and 209 to 253 (AHEN…SALA). Disordered stretches follow at residues 196 to 216 (DPRT…SRDS) and 399 to 465 (LVPP…SLQS). The segment covering 201–210 (PQASQSTQAH) has biased composition (polar residues). The segment covering 429 to 460 (SSPPSSLTSPSTPSSLGPTLSSTSGIGTGPSL) has biased composition (low complexity). A phosphoserine mark is found at Ser-462 and Ser-465. A Glycyl lysine isopeptide (Lys-Gly) (interchain with G-Cter in ubiquitin) cross-link involves residue Lys-472. WD repeat units follow at residues 542–582 (QNGA…LEEV), 592–632 (GHME…DRLK), and 635–674 (GHQD…EPLQ). Lys-680 participates in a covalent cross-link: Glycyl lysine isopeptide (Lys-Gly) (interchain with G-Cter in ubiquitin). Residues 728 to 768 (DVAPSTLVPSYEPRHWPGAPDWQGDARVFLYELLPESPFFM) form a WD 8 repeat. The segment at 857–925 (LQPPDMSPVS…FEGVDEDEWD (69 aa)) is disordered. A compositionally biased stretch (low complexity) spans 866–882 (SQAPREAPARRAPSSAQ). The span at 884–896 (LEEKSDQQKKEEL) shows a compositional bias: basic and acidic residues. Ser-915 is subject to Phosphoserine.

The protein belongs to the WD repeat coronin family. In terms of assembly, interacts with clathrin adapter AP1 complex. This interaction takes place at Golgi membranes and not AP1-positive endosomal membranes. Interacts (when ubiquitinated at Lys-472) with EPS15. In terms of processing, the membrane-associated form is phosphorylated on tyrosine residues. Ubiquitinated via 'Lys-33'-linked ubiquitin chains by the BCR(KLHL20) E3 ubiquitin ligase complex: 'Lys-33'-linked ubiquitination promotes interaction with EPS15 and facilitates actin polymerization at the trans-Golgi network, thereby facilitating post-Golgi trafficking. Deubiquitinated by ZRANB1/TRABID.

It localises to the golgi apparatus membrane. Its subcellular location is the golgi apparatus. The protein localises to the trans-Golgi network. The protein resides in the cytoplasmic vesicle. It is found in the cytoplasm. It localises to the cytosol. Its function is as follows. F-actin regulator involved in anterograde Golgi to endosome transport: upon ubiquitination via 'Lys-33'-linked ubiquitin chains by the BCR(KLHL20) E3 ubiquitin ligase complex, interacts with EPS15 and localizes to the trans-Golgi network, where it promotes actin polymerization, thereby facilitating post-Golgi trafficking. May play a role in the maintenance of the Golgi apparatus morphology. The chain is Coronin-7 (CORO7) from Pongo abelii (Sumatran orangutan).